The primary structure comprises 404 residues: Argininosuccinate synthase (404 aa).

Residues 12–20 (AYSGGLDTS) and Ala-39 contribute to the ATP site. 2 residues coordinate L-citrulline: Tyr-91 and Ser-96. Gly-121 is a binding site for ATP. L-aspartate-binding residues include Thr-123, Asn-127, and Asp-128. Asn-127 lines the L-citrulline pocket. The L-citrulline site is built by Arg-131, Ser-180, Ser-189, Glu-265, and Tyr-277.

It belongs to the argininosuccinate synthase family. Type 1 subfamily. Homotetramer.

Its subcellular location is the cytoplasm. It catalyses the reaction L-citrulline + L-aspartate + ATP = 2-(N(omega)-L-arginino)succinate + AMP + diphosphate + H(+). Its pathway is amino-acid biosynthesis; L-arginine biosynthesis; L-arginine from L-ornithine and carbamoyl phosphate: step 2/3. The sequence is that of Argininosuccinate synthase from Vibrio cholerae serotype O1 (strain ATCC 39541 / Classical Ogawa 395 / O395).